The chain runs to 72 residues: Translation initiation factor IF-1 (72 aa).

The region spanning 1–72 (MSKDDVIEMQ…TRGRITWRAK (72 aa)) is the S1-like domain.

It belongs to the IF-1 family. In terms of assembly, component of the 30S ribosomal translation pre-initiation complex which assembles on the 30S ribosome in the order IF-2 and IF-3, IF-1 and N-formylmethionyl-tRNA(fMet); mRNA recruitment can occur at any time during PIC assembly.

The protein localises to the cytoplasm. In terms of biological role, one of the essential components for the initiation of protein synthesis. Stabilizes the binding of IF-2 and IF-3 on the 30S subunit to which N-formylmethionyl-tRNA(fMet) subsequently binds. Helps modulate mRNA selection, yielding the 30S pre-initiation complex (PIC). Upon addition of the 50S ribosomal subunit IF-1, IF-2 and IF-3 are released leaving the mature 70S translation initiation complex. This Clostridium kluyveri (strain ATCC 8527 / DSM 555 / NBRC 12016 / NCIMB 10680 / K1) protein is Translation initiation factor IF-1.